Here is a 400-residue protein sequence, read N- to C-terminus: Large envelope protein (400 aa).

Position 1 is an N-acetylmethionine (Met-1). Disordered regions lie at residues 1 to 55 and 85 to 118; these read MGGW…WPEA and LTTV…SHPQ. Residue Gly-2 is the site of N-myristoyl glycine; by host attachment. The tract at residues 2 to 119 is pre-S1; that stretch reads GGWSSKPRQG…PPLRDSHPQA (118 aa). Residues 2–174 are pre-S; the sequence is GGWSSKPRQG…FSRTGDPAPN (173 aa). Residues 2 to 181 lie on the Virion surface; in external conformation side of the membrane; sequence GGWSSKPRQG…APNMESTTSG (180 aa). Residues 2 to 253 are Intravirion; in internal conformation-facing; it reads GGWSSKPRQG…PGYRWMCLRR (252 aa). Trp-4 carries N-linked (GlcNAc...) asparagine glycosylation. Residues 96–106 are compositionally biased toward polar residues; sequence STNRQSGRQPT. Residues 120 to 174 are pre-S2; it reads MQWNSTTFHQALLDPRVKGLYFPAGGSSSGTVNPVPTTASPISSIFSRTGDPAPN. The chain crosses the membrane as a helical span at residues 182–202; sequence FLGPLLVLQAGFFLLTRILTI. At 203–253 the chain is on the intravirion; in external conformation side; that stretch reads PQSLDSWWTSLNFLGGAPTCPGQNSQSPTSNHSPTSCPPICPGYRWMCLRR. A helical transmembrane segment spans residues 254-274; it reads FIIFLFILLLCLIFLLVLLDF. Residues 275–348 are Virion surface-facing; sequence QGMLPVCPLL…WASVRFSWLS (74 aa). An N-linked (GlcNAc...) asparagine; by host glycan is attached at Asn-320. The helical transmembrane segment at 349–369 threads the bilayer; the sequence is LLVPFVQWFAGLSPTVWLSVI. The Intravirion portion of the chain corresponds to 370–375; the sequence is WMMWYW. Residues 376–398 form a helical membrane-spanning segment; the sequence is GPSLYNILSPFLPLLPIFFCLWV. Topologically, residues 399–400 are virion surface; the sequence is YI.

The protein belongs to the orthohepadnavirus major surface antigen family. In its internal form (Li-HBsAg), interacts with the capsid protein and with the isoform S. Interacts with host chaperone CANX. In terms of assembly, associates with host chaperone CANX through its pre-S2 N glycan; this association may be essential for isoform M proper secretion. As to quaternary structure, interacts with isoform L. Interacts with the antigens of satellite virus HDV (HDVAgs); this interaction is required for encapsidation of HDV genomic RNA. In terms of processing, isoform M is N-terminally acetylated by host at a ratio of 90%, and N-glycosylated by host at the pre-S2 region. Post-translationally, myristoylated.

Its subcellular location is the virion membrane. In terms of biological role, the large envelope protein exists in two topological conformations, one which is termed 'external' or Le-HBsAg and the other 'internal' or Li-HBsAg. In its external conformation the protein attaches the virus to cell receptors and thereby initiating infection. This interaction determines the species specificity and liver tropism. This attachment induces virion internalization predominantly through caveolin-mediated endocytosis. The large envelope protein also assures fusion between virion membrane and endosomal membrane. In its internal conformation the protein plays a role in virion morphogenesis and mediates the contact with the nucleocapsid like a matrix protein. The middle envelope protein plays an important role in the budding of the virion. It is involved in the induction of budding in a nucleocapsid independent way. In this process the majority of envelope proteins bud to form subviral lipoprotein particles of 22 nm of diameter that do not contain a nucleocapsid. This is Large envelope protein from Hepatitis B virus genotype C subtype ar (isolate Japan/S-207/1988) (HBV-C).